The following is a 338-amino-acid chain: Fructose-1,6-bisphosphatase class 1 1 (338 aa).

The Mg(2+) site is built by Glu94, Asp116, Leu118, and Asp119. Residues 119 to 122, Asn210, and Lys276 each bind substrate; that span reads DGSS. Mg(2+) is bound at residue Glu282.

The protein belongs to the FBPase class 1 family. As to quaternary structure, homotetramer. Mg(2+) is required as a cofactor.

The protein resides in the cytoplasm. The enzyme catalyses beta-D-fructose 1,6-bisphosphate + H2O = beta-D-fructose 6-phosphate + phosphate. Its pathway is carbohydrate biosynthesis; gluconeogenesis. This Paraburkholderia phymatum (strain DSM 17167 / CIP 108236 / LMG 21445 / STM815) (Burkholderia phymatum) protein is Fructose-1,6-bisphosphatase class 1 1.